The chain runs to 308 residues: Lipoyl synthase 2 (308 aa).

The [4Fe-4S] cluster site is built by Cys49, Cys54, Cys60, Cys75, Cys79, Cys82, and Ser300. The Radical SAM core domain occupies 61-289 (YASGTATFLL…KRIAEGLGFK (229 aa)).

Belongs to the radical SAM superfamily. Lipoyl synthase family. [4Fe-4S] cluster serves as cofactor.

It localises to the cytoplasm. It carries out the reaction [[Fe-S] cluster scaffold protein carrying a second [4Fe-4S](2+) cluster] + N(6)-octanoyl-L-lysyl-[protein] + 2 oxidized [2Fe-2S]-[ferredoxin] + 2 S-adenosyl-L-methionine + 4 H(+) = [[Fe-S] cluster scaffold protein] + N(6)-[(R)-dihydrolipoyl]-L-lysyl-[protein] + 4 Fe(3+) + 2 hydrogen sulfide + 2 5'-deoxyadenosine + 2 L-methionine + 2 reduced [2Fe-2S]-[ferredoxin]. It participates in protein modification; protein lipoylation via endogenous pathway; protein N(6)-(lipoyl)lysine from octanoyl-[acyl-carrier-protein]: step 2/2. Functionally, catalyzes the radical-mediated insertion of two sulfur atoms into the C-6 and C-8 positions of the octanoyl moiety bound to the lipoyl domains of lipoate-dependent enzymes, thereby converting the octanoylated domains into lipoylated derivatives. The polypeptide is Lipoyl synthase 2 (Prochlorococcus marinus (strain SARG / CCMP1375 / SS120)).